The primary structure comprises 206 residues: Large ribosomal subunit protein uL13 (206 aa).

Belongs to the universal ribosomal protein uL13 family.

This chain is Large ribosomal subunit protein uL13 (RPL13A), found in Picea mariana (Black spruce).